An 85-amino-acid polypeptide reads, in one-letter code: Platelet factor 4 (85 aa).

Intrachain disulfides connect C25–C51 and C27–C67. At S41 the chain carries Phosphoserine. Heparin is bound at residue 76-82 (KKIIKRL).

It belongs to the intercrine alpha (chemokine CxC) family. In terms of assembly, homotetramer. Interacts with TNFAIP6 (via Link domain). Interacts with CCR1. Interacts with CXCR3. Interacts with THBD; this interaction enhances generation of activated protein C.

Its subcellular location is the secreted. Its function is as follows. Chemokine released during platelet aggregation that plays a role in different biological processes including hematopoiesis, cell proliferation, differentiation, and activation. Acts via different functional receptors including CCR1, CXCR3A or CXCR3B. Upon interaction with CXCR3A receptor, induces activated T-lymphocytes migration mediated via downstream Ras/extracellular signal-regulated kinase (ERK) signaling. Neutralizes the anticoagulant effect of heparin by binding more strongly to heparin than to the chondroitin-4-sulfate chains of the carrier molecule. Plays a role in the inhibition of hematopoiesis and in the maintenance of hematopoietic stem cell (HSC) quiescence. Chemotactic for neutrophils and monocytes via CCR1. Inhibits endothelial cell proliferation. In cooperation with toll-like receptor 8/TLR8, induces chromatin remodeling and activates inflammatory gene expression via the TBK1-IRF5 axis. In addition, induces myofibroblast differentiation and collagen synthesis in different precursor cells, including endothelial cells, by stimulating endothelial-to-mesenchymal transition. Interacts with thrombomodulin/THBD to enhance the activation of protein C and thus potentiates its anticoagulant activity. In Ovis aries (Sheep), this protein is Platelet factor 4 (PF4).